The sequence spans 333 residues: Foldase protein PrsA (333 aa).

A signal peptide spans 1-21; that stretch reads MKKRTIATGLVTLLSIVTLAA. Cys22 is lipidated: N-palmitoyl cysteine. Cys22 is lipidated: S-diacylglycerol cysteine. One can recognise a PpiC domain in the interval 144–237; sequence KPEVTAQVIQ…PVYYIVKITK (94 aa). The disordered stretch occupies residues 296-333; it reads AASGSGSSGSTTTTTAASSAATTAADDQTTAAETTAAE.

It belongs to the PrsA family.

The protein localises to the cell membrane. The enzyme catalyses [protein]-peptidylproline (omega=180) = [protein]-peptidylproline (omega=0). In terms of biological role, plays a major role in protein secretion by helping the post-translocational extracellular folding of several secreted proteins. The sequence is that of Foldase protein PrsA from Streptococcus mutans serotype c (strain ATCC 700610 / UA159).